The following is a 311-amino-acid chain: Putative UPF0607 protein ENSP00000382826 (311 aa).

The span at 48–61 shows a compositional bias: basic and acidic residues; it reads AEEPKEATEVKDQV. 3 disordered regions span residues 48-99, 186-229, and 291-311; these read AEEP…WYNP, GLLM…PLQL, and RKQL…GSCL. The segment covering 78–97 has biased composition (polar residues); that stretch reads EAASTSRPLETQGNLTSSWY. Composition is skewed to basic residues over residues 213–222 and 291–305; these read AGHRSRKRKL and RKQL…RQGR.

This sequence belongs to the UPF0607 family.

This chain is Putative UPF0607 protein ENSP00000382826, found in Homo sapiens (Human).